We begin with the raw amino-acid sequence, 406 residues long: Tyrosine-protein phosphatase non-receptor type 2 (406 aa).

Residues 5–275 enclose the Tyrosine-protein phosphatase domain; the sequence is IEREFEELDA…RFSYMAIIEG (271 aa). Y22 carries the phosphotyrosine modification. The residue at position 52 (S52) is a Phosphoserine. Residue Y68 is modified to Phosphotyrosine. Substrate is bound by residues D182, 216-222, and Q260; that span reads CSAGIGR. C216 (phosphocysteine intermediate) is an active-site residue. An S-nitrosocysteine modification is found at C216. Phosphoserine occurs at positions 293, 298, 304, 320, and 339. The tract at residues 341–406 is endoplasmic reticulum location; sequence ESILRKRIRE…ALVGWTLLFH (66 aa). Positions 371–406 are mediates interaction with STX17; that stretch reads ERKRKRWLYWQPILTKMGFVSVILVGALVGWTLLFH.

Belongs to the protein-tyrosine phosphatase family. Non-receptor class 1 subfamily. Interacts with RMDN3. Isoform 1 interacts with TMED9. Isoform 1 interacts with STX17; dephosphorylates STX17. Interacts with ITGA1 (via cytoplasmic domain); activates the phosphatase activity towards EGFR. Interacts with TRAF2; probably involved in tumor necrosis factor-mediated signaling. Interacts with MET. Interacts with FAM220A and STAT3; interaction with FAM220A promotes interaction of PTPN2 with transcriptional activator STAT3, leading to dephosphorylation of STAT3 by PTPN2 and negative regulation of STAT3 transcriptional activator activity. Post-translationally, specifically phosphorylated in a cell cycle-dependent manner by cyclin-dependent kinases CDK1 and CDK2. Probably activated through phosphorylation by PKR. Ubiquitously expressed. The highest expression levels were found in ovary, testis, thymus and kidney.

The protein resides in the endoplasmic reticulum. It localises to the endoplasmic reticulum-Golgi intermediate compartment. Its subcellular location is the nucleus. The protein localises to the cytoplasm. It is found in the cell membrane. The catalysed reaction is O-phospho-L-tyrosyl-[protein] + H2O = L-tyrosyl-[protein] + phosphate. In terms of biological role, non-receptor type tyrosine-specific phosphatase that dephosphorylates receptor protein tyrosine kinases including INSR, EGFR, CSF1R, PDGFR. Also dephosphorylates non-receptor protein tyrosine kinases like JAK1, JAK2, JAK3, Src family kinases, STAT1, STAT3 and STAT6 either in the nucleus or the cytoplasm. Negatively regulates numerous signaling pathways and biological processes like hematopoiesis, inflammatory response, cell proliferation and differentiation, and glucose homeostasis. Plays a multifaceted and important role in the development of the immune system. Functions in T-cell receptor signaling through dephosphorylation of FYN and LCK to control T-cells differentiation and activation. Dephosphorylates CSF1R, negatively regulating its downstream signaling and macrophage differentiation. Negatively regulates cytokine (IL2/interleukin-2 and interferon)-mediated signaling through dephosphorylation of the cytoplasmic kinases JAK1, JAK3 and their substrate STAT1, that propagate signaling downstream of the cytokine receptors. Also regulates the IL6/interleukin-6 and IL4/interleukin-4 cytokine signaling through dephosphorylation of STAT3 and STAT6 respectively. In addition to the immune system, it is involved in anchorage-dependent, negative regulation of EGF-stimulated cell growth. Activated by the integrin ITGA1/ITGB1, it dephosphorylates EGFR and negatively regulates EGF signaling. Dephosphorylates PDGFRB and negatively regulates platelet-derived growth factor receptor-beta signaling pathway and therefore cell proliferation. Negatively regulates tumor necrosis factor-mediated signaling downstream via MAPK through SRC dephosphorylation. May also regulate the hepatocyte growth factor receptor signaling pathway through dephosphorylation of the hepatocyte growth factor receptor MET. Also plays an important role in glucose homeostasis. For instance, negatively regulates the insulin receptor signaling pathway through the dephosphorylation of INSR and control gluconeogenesis and liver glucose production through negative regulation of the IL6 signaling pathways. May also bind DNA. This chain is Tyrosine-protein phosphatase non-receptor type 2 (Ptpn2), found in Mus musculus (Mouse).